Consider the following 400-residue polypeptide: MDKSLFEQARPILEQIQDNGFEAYYVGGSVRDYVMGRNIHDIDITTSATPDEIESIFSHTIPVGKEHGTINVVFNNENYEVTTFRAEEDYVDHRRPSGVTFVRDLYEDLQRRDFTMNAIAMDTAYKLYDYFDGQQDINNRIIRTVGIAAERFQEDALRMIRCLRFQSQLSFEIATETFEAMRTQMADIKFLSIERIVIELTKLMRGINVEKSFNHLKSLKAFNYMPYFEHLDMNQINVTEPIDLELLIAIVSVKFDINYSLKPLKLSNRQVKDINQYIQIMNALPSIFTKEQLKIFVYDYDTNLIKNIMVAADVLKANDIQGHEPLIVNLQTIDETLHHLPMHNRKDMMVNGGVLMAHLNAKSGPWLKDVLRQIEIAIVTGKVSNEETEILKWVDNHVKI.

ATP contacts are provided by G28 and R31. CTP is bound by residues G28 and R31. Positions 41 and 43 each coordinate Mg(2+). ATP-binding residues include R112, D155, R158, R161, and R164. Residues R112, D155, R158, R161, and R164 each coordinate CTP.

Belongs to the tRNA nucleotidyltransferase/poly(A) polymerase family. Bacterial CCA-adding enzyme type 3 subfamily. In terms of assembly, homodimer. The cofactor is Mg(2+).

The catalysed reaction is a tRNA precursor + 2 CTP + ATP = a tRNA with a 3' CCA end + 3 diphosphate. It carries out the reaction a tRNA with a 3' CCA end + 2 CTP + ATP = a tRNA with a 3' CCACCA end + 3 diphosphate. Functionally, catalyzes the addition and repair of the essential 3'-terminal CCA sequence in tRNAs without using a nucleic acid template. Adds these three nucleotides in the order of C, C, and A to the tRNA nucleotide-73, using CTP and ATP as substrates and producing inorganic pyrophosphate. tRNA 3'-terminal CCA addition is required both for tRNA processing and repair. Also involved in tRNA surveillance by mediating tandem CCA addition to generate a CCACCA at the 3' terminus of unstable tRNAs. While stable tRNAs receive only 3'-terminal CCA, unstable tRNAs are marked with CCACCA and rapidly degraded. The protein is CCA-adding enzyme of Staphylococcus aureus (strain bovine RF122 / ET3-1).